The following is a 373-amino-acid chain: Glutamine synthetase (373 aa).

The residue at position 2 (alanine 2) is an N-acetylalanine. The interval 2-25 (ATSASSHLNKGIKQVYMSLPQGEK) is required for glutamine-induced ubiquitination by CRL4(CRBN) and proteasomal degradation. Lysine 11 and lysine 14 each carry N6-acetyllysine. Positions 24-106 (EKVQAMYIWI…VFCEVFKYNR (83 aa)) constitute a GS beta-grasp domain. A Phosphotyrosine modification is found at tyrosine 104. The GS catalytic domain maps to 113 to 373 (LRHTCKRIMD…TGDEPFQYKN (261 aa)). Glutamate 134 contributes to the ATP binding site. Mn(2+) contacts are provided by glutamate 134, glutamate 136, glutamate 196, and glutamate 203. Position 203 to 208 (203 to 208 (EFQIGP)) interacts with ATP. 246-247 (NW) is a binding site for L-glutamate. Histidine 253 is a Mn(2+) binding site. ATP is bound by residues 255–257 (NFS), arginine 319, and arginine 324. Arginine 319 is an L-glutamate binding site. 336–338 (YFE) lines the ADP pocket. Glutamate 338 contributes to the Mn(2+) binding site. Residue arginine 340 participates in L-glutamate binding. At serine 343 the chain carries Phosphoserine.

Belongs to the glutamine synthetase family. In terms of assembly, decamer; composed of two pentamers. Interacts with PALMD. Interacts with RHOJ. Interacts with BEST2; this interaction tethers a fraction of GLUL to the membrane, causing a decrease of cytosolic glutamine synthase (GS) activity and inhibits the chloride channel activity of BEST2 by affecting the gating at the aperture in the absence of intracellular glutamate. Mg(2+) is required as a cofactor. Requires Mn(2+) as cofactor. In terms of processing, palmitoylated; undergoes autopalmitoylation. Acetylated by EP300/p300; acetylation is stimulated by increased glutamine levels and promotes ubiquitin-mediated proteasomal degradation. Post-translationally, ubiquitinated by ZNRF1. Ubiquitinated by the DCX (DDB1-CUL4-X-box) E3 ubiquitin-protein ligase complex called CRL4(CRBN), leading to proteasomal degradation.

It localises to the cytoplasm. It is found in the cytosol. The protein localises to the microsome. Its subcellular location is the mitochondrion. The protein resides in the cell membrane. The enzyme catalyses L-glutamate + NH4(+) + ATP = L-glutamine + ADP + phosphate + H(+). It catalyses the reaction L-cysteinyl-[protein] + hexadecanoyl-CoA = S-hexadecanoyl-L-cysteinyl-[protein] + CoA. Its activity is regulated as follows. Glutamine synthetase activity is inhibited by methionine sulfoximine (MSO). In terms of biological role, glutamine synthetase that catalyzes the ATP-dependent conversion of glutamate and ammonia to glutamine. Its role depends on tissue localization: in the brain, it regulates the levels of toxic ammonia and converts neurotoxic glutamate to harmless glutamine, whereas in the liver, it is one of the enzymes responsible for the removal of ammonia. Plays a key role in ammonium detoxification during erythropoiesis: the glutamine synthetase activity is required to remove ammonium generated by porphobilinogen deaminase (HMBS) during heme biosynthesis to prevent ammonium accumulation and oxidative stress. Essential for proliferation of fetal skin fibroblasts. Independently of its glutamine synthetase activity, required for endothelial cell migration during vascular development. Involved in angiogenesis by regulating membrane localization and activation of the GTPase RHOJ, possibly by promoting RHOJ palmitoylation. May act as a palmitoyltransferase for RHOJ: able to autopalmitoylate and then transfer the palmitoyl group to RHOJ. Plays a role in ribosomal 40S subunit biogenesis. Through the interaction with BEST2, inhibits BEST2 channel activity by affecting the gating at the aperture in the absence of intracellular L-glutamate, but sensitizes BEST2 to intracellular L-glutamate, which promotes the opening of BEST2 and thus relieves its inhibitory effect on BEST2. This chain is Glutamine synthetase, found in Canis lupus familiaris (Dog).